The following is a 284-amino-acid chain: 2,3,4,5-tetrahydropyridine-2,6-dicarboxylate N-succinyltransferase (284 aa).

Belongs to the transferase hexapeptide repeat family.

It localises to the cytoplasm. It catalyses the reaction (S)-2,3,4,5-tetrahydrodipicolinate + succinyl-CoA + H2O = (S)-2-succinylamino-6-oxoheptanedioate + CoA. It functions in the pathway amino-acid biosynthesis; L-lysine biosynthesis via DAP pathway; LL-2,6-diaminopimelate from (S)-tetrahydrodipicolinate (succinylase route): step 1/3. This Brucella abortus (strain S19) protein is 2,3,4,5-tetrahydropyridine-2,6-dicarboxylate N-succinyltransferase.